A 123-amino-acid polypeptide reads, in one-letter code: Small ribosomal subunit protein uS12 (123 aa).

The disordered stretch occupies residues 1 to 32; sequence MPTIQQLVRKGRTDKISKNKTPALKGSPQRRG. Asp89 carries the post-translational modification 3-methylthioaspartic acid. The tract at residues 103–123 is disordered; it reads DTQGVKGRKQARSRYGAKKEK. Positions 108–123 are enriched in basic residues; it reads KGRKQARSRYGAKKEK.

It belongs to the universal ribosomal protein uS12 family. In terms of assembly, part of the 30S ribosomal subunit. Contacts proteins S8 and S17. May interact with IF1 in the 30S initiation complex.

In terms of biological role, with S4 and S5 plays an important role in translational accuracy. Interacts with and stabilizes bases of the 16S rRNA that are involved in tRNA selection in the A site and with the mRNA backbone. Located at the interface of the 30S and 50S subunits, it traverses the body of the 30S subunit contacting proteins on the other side and probably holding the rRNA structure together. The combined cluster of proteins S8, S12 and S17 appears to hold together the shoulder and platform of the 30S subunit. In Cutibacterium acnes (strain DSM 16379 / KPA171202) (Propionibacterium acnes), this protein is Small ribosomal subunit protein uS12.